Consider the following 480-residue polypeptide: Proline--tRNA ligase (480 aa).

This sequence belongs to the class-II aminoacyl-tRNA synthetase family. ProS type 3 subfamily. As to quaternary structure, homodimer.

The protein localises to the cytoplasm. The enzyme catalyses tRNA(Pro) + L-proline + ATP = L-prolyl-tRNA(Pro) + AMP + diphosphate. Functionally, catalyzes the attachment of proline to tRNA(Pro) in a two-step reaction: proline is first activated by ATP to form Pro-AMP and then transferred to the acceptor end of tRNA(Pro). This Metallosphaera sedula (strain ATCC 51363 / DSM 5348 / JCM 9185 / NBRC 15509 / TH2) protein is Proline--tRNA ligase.